A 305-amino-acid chain; its full sequence is MPIRISDDLPAADILRSENIFTMSESRASLQNIRPLRVLILNLMPKKIETETQIMRLLSNTPLQVNVELIRVDARASRNTPKEHLDKFYSDFDRVKNQKWDGFVITGAPLGQLPFEDVYYWEKFVEIVEWSRHNVTSTLFLCWAAQAALTYLYGLKKETRGDKLSGIYLHRTHHHHHPLVRGFDDEFWAPLSRFAEFNSEVVSENSDLTIFADAPNAGIYLAASPDCRQVYVTGHPEYDASTLHNEYLRDLEEGLEPKQPVNYYPDNDQNKTPRAIWRSHGNLLYSNWLNYCVYQVTPYDLADLI.

C142 (acyl-thioester intermediate) is an active-site residue. Substrate is bound by residues K163 and S192. Residue H235 is the Proton acceptor of the active site. E237 is a catalytic residue. Position 249 (R249) interacts with substrate.

This sequence belongs to the MetA family.

Its subcellular location is the cytoplasm. The enzyme catalyses L-homoserine + succinyl-CoA = O-succinyl-L-homoserine + CoA. It functions in the pathway amino-acid biosynthesis; L-methionine biosynthesis via de novo pathway; O-succinyl-L-homoserine from L-homoserine: step 1/1. In terms of biological role, transfers a succinyl group from succinyl-CoA to L-homoserine, forming succinyl-L-homoserine. This Psychromonas ingrahamii (strain DSM 17664 / CCUG 51855 / 37) protein is Homoserine O-succinyltransferase.